Here is a 466-residue protein sequence, read N- to C-terminus: L-seryl-tRNA(Sec) selenium transferase (466 aa).

Position 293 is an N6-(pyridoxal phosphate)lysine (K293).

The protein belongs to the SelA family. The cofactor is pyridoxal 5'-phosphate.

The protein resides in the cytoplasm. The catalysed reaction is L-seryl-tRNA(Sec) + selenophosphate + H(+) = L-selenocysteinyl-tRNA(Sec) + phosphate. The protein operates within aminoacyl-tRNA biosynthesis; selenocysteinyl-tRNA(Sec) biosynthesis; selenocysteinyl-tRNA(Sec) from L-seryl-tRNA(Sec) (bacterial route): step 1/1. Functionally, converts seryl-tRNA(Sec) to selenocysteinyl-tRNA(Sec) required for selenoprotein biosynthesis. This is L-seryl-tRNA(Sec) selenium transferase from Desulfotalea psychrophila (strain LSv54 / DSM 12343).